Here is a 390-residue protein sequence, read N- to C-terminus: Neutrophil cytosol factor 1 (390 aa).

The PX domain maps to 4 to 125 (TFIRHIALLG…DFFKVRPDDL (122 aa)). 2 SH3 domains span residues 156 to 215 (IILQ…PLDS) and 226 to 285 (YAGE…KSGQ). Residues 285 to 390 (QDVSQAQRQI…STKRKLASAV (106 aa)) form a disordered region. S303 and S304 each carry phosphoserine. Residues 309-318 (HSIHQRSRKR) are compositionally biased toward basic residues. 4 positions are modified to phosphoserine: S320, S328, S345, and S348.

As to quaternary structure, component of the phagocyte NADPH oxidase complex composed of an obligatory core heterodimer formed by the membrane proteins CYBA and CYBB and the cytosolic regulatory subunits NCF1/p47-phox, NCF2/p67-phox, NCF4/p40-phox and the small GTPase RAC1 or RAC2. Part of a cytosolic complex composed at least by NCF1, NCF2 and NCF4. Interacts (via C-terminus) with NCF2 (via the C-terminal SH3 domain). Interacts with NCF4. Interacts with CYBB. Interacts (via the second SH3 domain) with CYBA; interaction is phosphorylation-dependent. Interacts with NOXA1. Interacts with ADAM15. Interacts with TRAF4. Interacts with FASLG. Interacts with PARK7 (via C-terminus); the interaction is enhanced by LPS and modulates NCF1 phosphorylation and membrane translocation. In terms of processing, phosphorylated by PRKCD; phosphorylation induces activation of NCF1, leading to assembly and activation of the NADPH oxidase complex. As to expression, detected in peripheral blood monocytes and neutrophils (at protein level).

It is found in the cytoplasm. The protein localises to the cytosol. It localises to the membrane. In terms of biological role, subunit of the phagocyte NADPH oxidase complex that mediates the transfer of electrons from cytosolic NADPH to O2 to produce the superoxide anion (O2(-)). In the activated complex, electrons are first transferred from NADPH to flavin adenine dinucleotide (FAD) and subsequently transferred via two heme molecules to molecular oxygen, producing superoxide through an outer-sphere reaction. Activation of the NADPH oxidase complex is initiated by the assembly of cytosolic subunits of the NADPH oxidase complex with the core NADPH oxidase complex to form a complex at the plasma membrane or phagosomal membrane. This activation process is initiated by phosphorylation dependent binding of the cytosolic NCF1/p47-phox subunit to the C-terminus of CYBA/p22-phox. This is Neutrophil cytosol factor 1 from Homo sapiens (Human).